The following is a 245-amino-acid chain: Orotidine 5'-phosphate decarboxylase (245 aa).

Substrate-binding positions include D22, K44, 71 to 80 (DLKFHDIPNT), T131, R192, Q201, G221, and R222. The active-site Proton donor is K73.

The protein belongs to the OMP decarboxylase family. Type 1 subfamily. As to quaternary structure, homodimer.

The enzyme catalyses orotidine 5'-phosphate + H(+) = UMP + CO2. It functions in the pathway pyrimidine metabolism; UMP biosynthesis via de novo pathway; UMP from orotate: step 2/2. Catalyzes the decarboxylation of orotidine 5'-monophosphate (OMP) to uridine 5'-monophosphate (UMP). The polypeptide is Orotidine 5'-phosphate decarboxylase (Shigella flexneri serotype 5b (strain 8401)).